The following is a 228-amino-acid chain: Aquaporin Z 2 (228 aa).

2 helical membrane-spanning segments follow: residues 9 to 29 (FFGT…AAAF) and 34 to 54 (IGFT…AYAV). Residues 63–65 (NPA) carry the NPA 1 motif. 3 helical membrane passes run 82-102 (VPYV…LYVI), 129-149 (LVSA…VILG), and 158-178 (GFAP…SIPV). The NPA 2 signature appears at 184–186 (NPA). Residues 204-224 (WLFWLAPIVGGAAGAVIWKLF) traverse the membrane as a helical segment.

It belongs to the MIP/aquaporin (TC 1.A.8) family. In terms of assembly, homotetramer.

It localises to the cell inner membrane. It catalyses the reaction H2O(in) = H2O(out). Its function is as follows. Channel that permits osmotically driven movement of water in both directions. It is involved in the osmoregulation and in the maintenance of cell turgor during volume expansion in rapidly growing cells. It mediates rapid entry or exit of water in response to abrupt changes in osmolarity. The chain is Aquaporin Z 2 from Agrobacterium fabrum (strain C58 / ATCC 33970) (Agrobacterium tumefaciens (strain C58)).